The sequence spans 484 residues: Polyamine oxidase 3 (484 aa).

4 residues coordinate FAD: glutamate 47, arginine 55, valine 236, and glutamate 423. A Microbody targeting signal motif is present at residues 482–484; it reads SRL.

It belongs to the flavin monoamine oxidase family. Requires FAD as cofactor. In terms of tissue distribution, widely expressed.

It localises to the peroxisome. The enzyme catalyses spermine + O2 + H2O = 3-aminopropanal + spermidine + H2O2. It catalyses the reaction N(1)-acetylspermine + O2 + H2O = 3-acetamidopropanal + spermidine + H2O2. The catalysed reaction is norspermine + O2 + H2O = norspermidine + 3-aminopropanal + H2O2. It carries out the reaction spermidine + O2 + H2O = 3-aminopropanal + putrescine + H2O2. The enzyme catalyses thermospermine + O2 + H2O = 3-aminopropanal + spermidine + H2O2. It functions in the pathway amine and polyamine degradation; spermine degradation. Its pathway is amine and polyamine degradation; spermidine degradation. Its function is as follows. Flavoenzyme involved in polyamine back-conversion. Catalyzes the oxidation of the secondary amino group of polyamines, such as spermine, spermidine and their acetyl derivatives. Substrate preference is spermidine &gt; norspermine &gt; thermospermine &gt; N(1)-acetylspermine &gt; spermine. No activity detected when putrescine is used as substrate. Plays an important role in the regulation of polyamine intracellular concentration. The chain is Polyamine oxidase 3 from Oryza sativa subsp. japonica (Rice).